The primary structure comprises 119 residues: ATP-dependent Clp protease adapter protein ClpS (119 aa).

Residues 1–29 (MICPPGENKSMAERKQGGQGNGVGSSVVT) are disordered.

Belongs to the ClpS family. In terms of assembly, binds to the N-terminal domain of the chaperone ClpA.

Involved in the modulation of the specificity of the ClpAP-mediated ATP-dependent protein degradation. The polypeptide is ATP-dependent Clp protease adapter protein ClpS (Caulobacter vibrioides (strain ATCC 19089 / CIP 103742 / CB 15) (Caulobacter crescentus)).